Here is a 219-residue protein sequence, read N- to C-terminus: Ribose-5-phosphate isomerase A (219 aa).

Substrate is bound by residues 28 to 31 (TGST), 81 to 84 (DGAD), and 94 to 97 (KGGG). Glutamate 103 acts as the Proton acceptor in catalysis. Lysine 121 contacts substrate.

The protein belongs to the ribose 5-phosphate isomerase family. In terms of assembly, homodimer.

It carries out the reaction aldehydo-D-ribose 5-phosphate = D-ribulose 5-phosphate. Its pathway is carbohydrate degradation; pentose phosphate pathway; D-ribose 5-phosphate from D-ribulose 5-phosphate (non-oxidative stage): step 1/1. Functionally, catalyzes the reversible conversion of ribose-5-phosphate to ribulose 5-phosphate. The sequence is that of Ribose-5-phosphate isomerase A from Shewanella oneidensis (strain ATCC 700550 / JCM 31522 / CIP 106686 / LMG 19005 / NCIMB 14063 / MR-1).